We begin with the raw amino-acid sequence, 280 residues long: 3-phenylpropionate-dihydrodiol/cinnamic acid-dihydrodiol dehydrogenase (280 aa).

Ser-143 lines the substrate pocket. Tyr-156 functions as the Proton acceptor in the catalytic mechanism.

It belongs to the short-chain dehydrogenases/reductases (SDR) family.

It catalyses the reaction 3-(cis-5,6-dihydroxycyclohexa-1,3-dien-1-yl)propanoate + NAD(+) = 3-(2,3-dihydroxyphenyl)propanoate + NADH + H(+). The catalysed reaction is (2E)-3-(cis-5,6-dihydroxycyclohexa-1,3-dien-1-yl)prop-2-enoate + NAD(+) = (2E)-3-(2,3-dihydroxyphenyl)prop-2-enoate + NADH + H(+). It participates in aromatic compound metabolism; 3-phenylpropanoate degradation. Its function is as follows. Converts 3-phenylpropionate-dihydrodiol (PP-dihydrodiol) and cinnamic acid-dihydrodiol (CI-dihydrodiol) into 3-(2,3-dihydroxylphenyl)propanoic acid (DHPP) and 2,3-dihydroxicinnamic acid (DHCI), respectively. The sequence is that of 3-phenylpropionate-dihydrodiol/cinnamic acid-dihydrodiol dehydrogenase from Photorhabdus laumondii subsp. laumondii (strain DSM 15139 / CIP 105565 / TT01) (Photorhabdus luminescens subsp. laumondii).